Consider the following 576-residue polypeptide: Sulfite reductase [NADPH] hemoprotein beta-component (576 aa).

Positions 435, 441, 480, and 484 each coordinate [4Fe-4S] cluster. Residue Cys-484 coordinates siroheme.

This sequence belongs to the nitrite and sulfite reductase 4Fe-4S domain family. Alpha(8)-beta(8). The alpha component is a flavoprotein, the beta component is a hemoprotein. Siroheme is required as a cofactor. The cofactor is [4Fe-4S] cluster.

It carries out the reaction hydrogen sulfide + 3 NADP(+) + 3 H2O = sulfite + 3 NADPH + 4 H(+). It functions in the pathway sulfur metabolism; hydrogen sulfide biosynthesis; hydrogen sulfide from sulfite (NADPH route): step 1/1. Its function is as follows. Component of the sulfite reductase complex that catalyzes the 6-electron reduction of sulfite to sulfide. This is one of several activities required for the biosynthesis of L-cysteine from sulfate. In Yersinia pseudotuberculosis serotype O:1b (strain IP 31758), this protein is Sulfite reductase [NADPH] hemoprotein beta-component.